A 151-amino-acid polypeptide reads, in one-letter code: 3-dehydroquinate dehydratase 1 (151 aa).

Catalysis depends on Y23, which acts as the Proton acceptor. Residues N75, H81, and D88 each contribute to the substrate site. H101 functions as the Proton donor in the catalytic mechanism. Residues 102-103 and R112 each bind substrate; that span reads LS.

Belongs to the type-II 3-dehydroquinase family. Homododecamer.

It catalyses the reaction 3-dehydroquinate = 3-dehydroshikimate + H2O. It functions in the pathway metabolic intermediate biosynthesis; chorismate biosynthesis; chorismate from D-erythrose 4-phosphate and phosphoenolpyruvate: step 3/7. Functionally, catalyzes a trans-dehydration via an enolate intermediate. In Pseudomonas putida (strain ATCC 47054 / DSM 6125 / CFBP 8728 / NCIMB 11950 / KT2440), this protein is 3-dehydroquinate dehydratase 1 (aroQ1).